A 731-amino-acid polypeptide reads, in one-letter code: Probable G-protein coupled receptor 149 (731 aa).

Residues 1 to 35 (MSLFLSNLSTNDSSLWKENHNSTDLLNPPGTLNIY) are Extracellular-facing. N-linked (GlcNAc...) asparagine glycosylation is found at asparagine 7, asparagine 11, and asparagine 21. Residues 36–56 (LFCLTCLMTFAALVGSIYSLI) traverse the membrane as a helical segment. The Cytoplasmic portion of the chain corresponds to 57–69 (SLLKMQNRTVVSM). The chain crosses the membrane as a helical span at residues 70–90 (LVASWSVDDLMSVLSVTIFMF). Over 91-109 (LQWPNEVPGYFQFLCTTSA) the chain is Extracellular. An intrachain disulfide couples cysteine 105 to cysteine 182. A helical membrane pass occupies residues 110–132 (LMYLCQGLSSNLKATLLVSYNFY). Residues 133 to 155 (TMHRGVGSQTASRRSGQVLGVVL) lie on the Cytoplasmic side of the membrane. The helical transmembrane segment at 156–176 (TVWAASLLLSALPLCGWGAFV) threads the bilayer. The Extracellular segment spans residues 177–189 (RTPWGCLVDCSSS). A helical membrane pass occupies residues 190 to 210 (YVLFLSIVYALAFGLLVGLSV). Topologically, residues 211-310 (PLTHRLLCSE…SFTVSVAQKR (100 aa)) are cytoplasmic. Residues 234-271 (RGASIPGTPPTAGRVVSLSPEDAPGPSLRRSGGCSPSS) form a disordered region. Residues 311 to 331 (FALILALTKVVLWLPMMMHMV) traverse the membrane as a helical segment. Residues 332–342 (VQNVVGFQSLP) lie on the Extracellular side of the membrane. Residues 343–363 (LETFSFLLTLLATTVTPVFVL) form a helical membrane-spanning segment. The Cytoplasmic segment spans residues 364–731 (SKRWTHLPCG…RKREEESKGS (368 aa)). The interval 475–526 (NTDITEAKQDSNNKKDAFSDKTGGDINYEETTFSEGPERRLSHEESQKPDLS) is disordered. 2 stretches are compositionally biased toward basic and acidic residues: residues 479–497 (TEAK…DKTG) and 510–526 (GPER…PDLS).

The protein belongs to the G-protein coupled receptor 1 family.

The protein localises to the cell membrane. Its function is as follows. Orphan receptor. This is Probable G-protein coupled receptor 149 (GPR149) from Homo sapiens (Human).